Reading from the N-terminus, the 148-residue chain is D-aminoacyl-tRNA deacylase (148 aa).

A Gly-cisPro motif, important for rejection of L-amino acids motif is present at residues 137-138; the sequence is GP.

Belongs to the DTD family. Homodimer.

It is found in the cytoplasm. The catalysed reaction is glycyl-tRNA(Ala) + H2O = tRNA(Ala) + glycine + H(+). It catalyses the reaction a D-aminoacyl-tRNA + H2O = a tRNA + a D-alpha-amino acid + H(+). Its function is as follows. An aminoacyl-tRNA editing enzyme that deacylates mischarged D-aminoacyl-tRNAs. Also deacylates mischarged glycyl-tRNA(Ala), protecting cells against glycine mischarging by AlaRS. Acts via tRNA-based rather than protein-based catalysis; rejects L-amino acids rather than detecting D-amino acids in the active site. By recycling D-aminoacyl-tRNA to D-amino acids and free tRNA molecules, this enzyme counteracts the toxicity associated with the formation of D-aminoacyl-tRNA entities in vivo and helps enforce protein L-homochirality. This Aquifex aeolicus (strain VF5) protein is D-aminoacyl-tRNA deacylase.